We begin with the raw amino-acid sequence, 37 residues long: Photosystem II reaction center protein Psb30 (37 aa).

A helical transmembrane segment spans residues 10–30 (LISLLLLTLIMLAGPAVIALW).

Belongs to the Psb30/Ycf12 family. In terms of assembly, PSII is composed of 1 copy each of membrane proteins PsbA, PsbB, PsbC, PsbD, PsbE, PsbF, PsbH, PsbI, PsbJ, PsbK, PsbL, PsbM, PsbT, PsbX, Psb30/Ycf12, peripheral proteins PsbO, CyanoQ (PsbQ), PsbU, PsbV and a large number of cofactors. It forms dimeric complexes.

The protein resides in the cell inner membrane. Functionally, a core subunit of photosystem II (PSII), probably helps stabilize the reaction center. The polypeptide is Photosystem II reaction center protein Psb30 (Gloeobacter violaceus (strain ATCC 29082 / PCC 7421)).